The chain runs to 312 residues: Acetyl-coenzyme A carboxylase carboxyl transferase subunit alpha (312 aa).

One can recognise a CoA carboxyltransferase C-terminal domain in the interval 36-286 (NLEKEISKTY…ADYVKKSLNE (251 aa)).

Belongs to the AccA family. As to quaternary structure, acetyl-CoA carboxylase is a heterohexamer composed of biotin carboxyl carrier protein (AccB), biotin carboxylase (AccC) and two subunits each of ACCase subunit alpha (AccA) and ACCase subunit beta (AccD).

The protein resides in the cytoplasm. The catalysed reaction is N(6)-carboxybiotinyl-L-lysyl-[protein] + acetyl-CoA = N(6)-biotinyl-L-lysyl-[protein] + malonyl-CoA. Its pathway is lipid metabolism; malonyl-CoA biosynthesis; malonyl-CoA from acetyl-CoA: step 1/1. Functionally, component of the acetyl coenzyme A carboxylase (ACC) complex. First, biotin carboxylase catalyzes the carboxylation of biotin on its carrier protein (BCCP) and then the CO(2) group is transferred by the carboxyltransferase to acetyl-CoA to form malonyl-CoA. In Campylobacter jejuni (strain RM1221), this protein is Acetyl-coenzyme A carboxylase carboxyl transferase subunit alpha.